A 327-amino-acid polypeptide reads, in one-letter code: DNA repair protein XRCC4 (327 aa).

The interaction with IFFO1 stretch occupies residues 1–211 (MERKVSRISL…QLEKNLKPER (211 aa)). A Phosphoserine modification is found at S53. 2 coiled-coil regions span residues 133-153 (IAEK…LLRD) and 183-213 (LNEK…ERET). Interaction with LIG4 stretches follow at residues 179–210 (FILV…LKPE) and 179–211 (FILV…KPER). Phosphoserine is present on S192. K208 is covalently cross-linked (Glycyl lysine isopeptide (Lys-Gly) (interchain with G-Cter in SUMO)). A Phosphotyrosine modification is found at Y226. A Phosphoserine modification is found at S229. Residue T230 is modified to Phosphothreonine. Phosphoserine occurs at positions 249 and 253. Residues 255–327 (DVTDIAPSRK…RNSSPEDIFD (73 aa)) form a disordered region. Residues 263-268 (RKRRHH) carry the Nuclear localization signal motif. K289 participates in a covalent cross-link: Glycyl lysine isopeptide (Lys-Gly) (interchain with G-Cter in ubiquitin). A phosphoserine mark is found at S294, S295, S308, and S313. A compositionally biased stretch (polar residues) spans 308–327 (SAGNMSLETLRNSSPEDIFD). T316 is subject to Phosphothreonine. Phosphoserine occurs at positions 320 and 321.

The protein belongs to the XRCC4-XLF family. XRCC4 subfamily. In terms of assembly, homodimer and homotetramer in solution. Interacts with NHEJ1/XLF; the interaction is direct and is mediated via a head-to-head interaction between N-terminal head regions. Interacts with LIG4; the LIG4-XRCC4 subcomplex has a 1:2 stoichiometry and XRCC4 is required for LIG4 stability. Component of the core long-range non-homologous end joining (NHEJ) complex (also named DNA-PK complex) composed of PRKDC, LIG4, XRCC4, XRCC6/Ku70, XRCC5/Ku86 and NHEJ1/XLF. Additional component of the NHEJ complex includes PAXX. Following autophosphorylation, PRKDC dissociates from DNA, leading to formation of the short-range NHEJ complex, composed of LIG4, XRCC4, XRCC6/Ku70, XRCC5/Ku86 and NHEJ1/XLF. Interacts with PRKDC; the interaction is direct. Interacts with XRCC6/Ku70; the interaction is direct. Interacts with APTX and APLF. Forms a heterotetramer with IFFO1; the interaction involves LIG4-free XRCC4 and leads to the relocalization of IFFO1 to the sites of DNA damage. Interacts with PNKP; mainly interacts with PNKP when phosphorylated at Thr-230, but is also able to interact at much lower level with PNKP when not unphosphorylated. Interacts with POLL (DNA polymerase lambda). Interacts with XKR4; interacts with the processed form of XKR4, which is cleaved by caspase. In terms of processing, phosphorylated by PRKDC at the C-terminus in response to DNA damage; Ser-253 constitutes the main phosphorylation sites. Phosphorylations by PRKDC at the C-terminus of XRCC4 and NHEJ1/XLF are highly redundant and regulate ability of the XRCC4-NHEJ1/XLF subcomplex to bridge DNA. Phosphorylation by PRKDC does not prevent interaction with NHEJ1/XLF but disrupts ability to bridge DNA and promotes detachment from DNA. Phosphorylation at Ser-320 and Ser-321 by PRKDC promotes recognition by the SCF(FBXW7) complex and subsequent ubiquitination via 'Lys-63'-linked ubiquitin. Phosphorylation at Thr-230 by CK2 promotes interaction with PNKP; regulating PNKP activity and localization to DNA damage sites. Phosphorylation by CK2 promotes interaction with APTX. Ubiquitinated at Lys-289 by the SCF(FBXW7) complex via 'Lys-63'-linked ubiquitination, thereby promoting double-strand break repair: the SCF(FBXW7) complex specifically recognizes XRCC4 when phosphorylated at Ser-320 and Ser-321 by PRKDC, and 'Lys-63'-linked ubiquitination facilitates DNA non-homologous end joining (NHEJ) by enhancing association with XRCC5/Ku80 and XRCC6/Ku70. Monoubiquitinated. Post-translationally, undergoes proteolytic processing by caspase-3 (CASP3). This generates the protein XRCC4, C-terminus (XRCC4/C), which translocates to the cytoplasm and activates phospholipid scramblase activity of XKR4, thereby promoting phosphatidylserine exposure on apoptotic cell surface.

It localises to the nucleus. The protein localises to the chromosome. It is found in the cytoplasm. DNA non-homologous end joining (NHEJ) core factor, required for double-strand break repair and V(D)J recombination. Acts as a scaffold protein that regulates recruitment of other proteins to DNA double-strand breaks (DSBs). Associates with NHEJ1/XLF to form alternating helical filaments that bridge DNA and act like a bandage, holding together the broken DNA until it is repaired. The XRCC4-NHEJ1/XLF subcomplex binds to the DNA fragments of a DSB in a highly diffusive manner and robustly bridges two independent DNA molecules, holding the broken DNA fragments in close proximity to one other. The mobility of the bridges ensures that the ends remain accessible for further processing by other repair factors. Plays a key role in the NHEJ ligation step of the broken DNA during DSB repair via direct interaction with DNA ligase IV (LIG4): the LIG4-XRCC4 subcomplex reseals the DNA breaks after the gap filling is completed. XRCC4 stabilizes LIG4, regulates its subcellular localization and enhances LIG4's joining activity. Binding of the LIG4-XRCC4 subcomplex to DNA ends is dependent on the assembly of the DNA-dependent protein kinase complex DNA-PK to these DNA ends. Promotes displacement of PNKP from processed strand break termini. In terms of biological role, acts as an activator of the phospholipid scramblase activity of XKR4. This form, which is generated upon caspase-3 (CASP3) cleavage, translocates into the cytoplasm and interacts with XKR4, thereby promoting phosphatidylserine scramblase activity of XKR4 and leading to phosphatidylserine exposure on apoptotic cell surface. The chain is DNA repair protein XRCC4 from Cricetulus griseus (Chinese hamster).